A 71-amino-acid polypeptide reads, in one-letter code: Defensin-like protein 124 (71 aa).

A signal peptide spans 1 to 25; it reads MSKPTVIVIFMAILVLGMATKETQG. 4 disulfides stabilise this stretch: Cys-28–Cys-71, Cys-40–Cys-60, Cys-45–Cys-65, and Cys-49–Cys-67.

This sequence belongs to the DEFL family.

It is found in the secreted. This Arabidopsis thaliana (Mouse-ear cress) protein is Defensin-like protein 124 (LCR16).